Reading from the N-terminus, the 266-residue chain is 3-methyl-2-oxobutanoate hydroxymethyltransferase 2 (266 aa).

Residues aspartate 45 and aspartate 84 each contribute to the Mg(2+) site. Residues 45–46 (DS), aspartate 84, and lysine 112 each bind 3-methyl-2-oxobutanoate. Residue glutamate 114 coordinates Mg(2+). Residue glutamate 181 is the Proton acceptor of the active site.

Belongs to the PanB family. As to quaternary structure, homodecamer; pentamer of dimers. Mg(2+) serves as cofactor.

It localises to the cytoplasm. The enzyme catalyses 3-methyl-2-oxobutanoate + (6R)-5,10-methylene-5,6,7,8-tetrahydrofolate + H2O = 2-dehydropantoate + (6S)-5,6,7,8-tetrahydrofolate. Its pathway is cofactor biosynthesis; (R)-pantothenate biosynthesis; (R)-pantoate from 3-methyl-2-oxobutanoate: step 1/2. Its function is as follows. Catalyzes the reversible reaction in which hydroxymethyl group from 5,10-methylenetetrahydrofolate is transferred onto alpha-ketoisovalerate to form ketopantoate. In Pseudomonas fluorescens (strain ATCC BAA-477 / NRRL B-23932 / Pf-5), this protein is 3-methyl-2-oxobutanoate hydroxymethyltransferase 2.